We begin with the raw amino-acid sequence, 405 residues long: Na(+)/H(+) antiporter NhaA 1 (405 aa).

A run of 11 helical transmembrane segments spans residues 20–40, 68–88, 105–125, 134–154, 163–183, 186–206, 214–234, 263–283, 301–321, 334–354, and 371–391; these read FVSDASAGILLILVAAAAMIV, LHLWINDGLMAIFFFVVGLEV, LPVLAAIAGMAVPAIVYVGVV, GWAIPAATDIAFAMGVLGLLG, LFLLTVAIVDDIGAVLVIAAF, ANLKVMWLVIALGIFGVMVGM, IWPYILVALVLWVAVLFSGVH, GLAPWSAYLVVPIFGFANAGV, IAAGLVVGKQLGIFGIIVAAV, WIEIWGVSILTGIGFTMSLFI, and IGILGGSLISAILGYTILRLT.

The protein belongs to the NhaA Na(+)/H(+) (TC 2.A.33) antiporter family.

Its subcellular location is the cell inner membrane. It carries out the reaction Na(+)(in) + 2 H(+)(out) = Na(+)(out) + 2 H(+)(in). Functionally, na(+)/H(+) antiporter that extrudes sodium in exchange for external protons. The sequence is that of Na(+)/H(+) antiporter NhaA 1 from Erythrobacter litoralis (strain HTCC2594).